A 235-amino-acid polypeptide reads, in one-letter code: Aspartate/glutamate leucyltransferase (235 aa).

It belongs to the R-transferase family. Bpt subfamily.

It is found in the cytoplasm. It catalyses the reaction N-terminal L-glutamyl-[protein] + L-leucyl-tRNA(Leu) = N-terminal L-leucyl-L-glutamyl-[protein] + tRNA(Leu) + H(+). The catalysed reaction is N-terminal L-aspartyl-[protein] + L-leucyl-tRNA(Leu) = N-terminal L-leucyl-L-aspartyl-[protein] + tRNA(Leu) + H(+). Functionally, functions in the N-end rule pathway of protein degradation where it conjugates Leu from its aminoacyl-tRNA to the N-termini of proteins containing an N-terminal aspartate or glutamate. This is Aspartate/glutamate leucyltransferase from Pseudomonas savastanoi pv. phaseolicola (strain 1448A / Race 6) (Pseudomonas syringae pv. phaseolicola (strain 1448A / Race 6)).